The following is a 197-amino-acid chain: MEISASLVKQLRDETGAGFMECKKALEETGGDLEKAKLVLKEKGLARAEKKIGRAASQGLIHAYIHGEGKLGVLVEVNCETDFVARTDDFKELVHEIALQIAGMAPEYVAVEDVPEEVIEQEKEIYRKQAENEGKPAEIIDKIVEGKLQNFYKSKVLLEQPYVRDDSKTIKDLIKEKIALLGENIVVRRFVRWTLGE.

Positions 81 to 84 (TDFV) are involved in Mg(2+) ion dislocation from EF-Tu.

Belongs to the EF-Ts family.

Its subcellular location is the cytoplasm. Its function is as follows. Associates with the EF-Tu.GDP complex and induces the exchange of GDP to GTP. It remains bound to the aminoacyl-tRNA.EF-Tu.GTP complex up to the GTP hydrolysis stage on the ribosome. This Coprothermobacter proteolyticus (strain ATCC 35245 / DSM 5265 / OCM 4 / BT) protein is Elongation factor Ts.